The primary structure comprises 277 residues: S-formylglutathione hydrolase FrmB (277 aa).

Residues serine 145, aspartate 221, and histidine 254 each act as charge relay system in the active site.

It belongs to the esterase D family.

It carries out the reaction S-formylglutathione + H2O = formate + glutathione + H(+). In terms of biological role, serine hydrolase involved in the detoxification of formaldehyde. Hydrolyzes S-formylglutathione to glutathione and formate. In Escherichia coli (strain K12 / DH10B), this protein is S-formylglutathione hydrolase FrmB (frmB).